The primary structure comprises 91 residues: Potassium channel toxin MeuTXK-beta-1 (91 aa).

The signal sequence occupies residues 1-19; that stretch reads MQRNLVVLLFLGMVALSSC. Positions 54–91 constitute a BetaSPN-type CS-alpha/beta domain; sequence QFGCPAYQGYCDDHCQDIEKKEGFCHGFKCKCGIPMGF. 3 cysteine pairs are disulfide-bonded: cysteine 57-cysteine 78, cysteine 64-cysteine 83, and cysteine 68-cysteine 85.

Expressed by the venom gland.

Its subcellular location is the secreted. Functionally, has a low affinity binding to potassium channels of rat brain synaptosomes. Displays weak antibacterial activity against Stenotrophomonas sp. Strongly inhibits the development of the Plasmodium berghei ookinetes. Displays slight hemolytic effect on mouse erythrocytes. Induces cytolysis on Xenopus oocytes at high concentrations. Is not toxic towards mice and towards the insect Tenebrio molitor. In Mesobuthus eupeus (Lesser Asian scorpion), this protein is Potassium channel toxin MeuTXK-beta-1.